The following is a 145-amino-acid chain: Ribonuclease H (145 aa).

The RNase H type-1 domain maps to 1–142 (MKEVVIYTDG…CDEIARSMIK (142 aa)). The Mg(2+) site is built by Asp-9, Glu-47, Asp-69, and Asp-134.

It belongs to the RNase H family. As to quaternary structure, monomer. Mg(2+) serves as cofactor.

The protein localises to the cytoplasm. The enzyme catalyses Endonucleolytic cleavage to 5'-phosphomonoester.. In terms of biological role, endonuclease that specifically degrades the RNA of RNA-DNA hybrids. The protein is Ribonuclease H of Caldicellulosiruptor saccharolyticus (strain ATCC 43494 / DSM 8903 / Tp8T 6331).